The primary structure comprises 65 residues: Large ribosomal subunit protein bL35 (65 aa).

Belongs to the bacterial ribosomal protein bL35 family.

The polypeptide is Large ribosomal subunit protein bL35 (Porphyromonas gingivalis (strain ATCC 33277 / DSM 20709 / CIP 103683 / JCM 12257 / NCTC 11834 / 2561)).